The following is a 323-amino-acid chain: tRNA dimethylallyltransferase (323 aa).

Residue 32–39 participates in ATP binding; sequence GPTASGKS. Substrate is bound at residue 34 to 39; it reads TASGKS. The interaction with substrate tRNA stretch occupies residues 57–60; it reads DSMQ.

The protein belongs to the IPP transferase family. As to quaternary structure, monomer. Requires Mg(2+) as cofactor.

It catalyses the reaction adenosine(37) in tRNA + dimethylallyl diphosphate = N(6)-dimethylallyladenosine(37) in tRNA + diphosphate. Its function is as follows. Catalyzes the transfer of a dimethylallyl group onto the adenine at position 37 in tRNAs that read codons beginning with uridine, leading to the formation of N6-(dimethylallyl)adenosine (i(6)A). This is tRNA dimethylallyltransferase from Rhodopseudomonas palustris (strain BisB5).